An 85-amino-acid polypeptide reads, in one-letter code: MASPLSPGSRILIGLIRGYQLVISPLLGPRCRFHPTCSHYGIEALRRFGMIKGSWLTLKRVLKCHPLNSGGDDPVPPKLDDNREH.

Residues 66-85 form a disordered region; it reads PLNSGGDDPVPPKLDDNREH.

This sequence belongs to the UPF0161 family.

The protein localises to the cell inner membrane. In terms of biological role, could be involved in insertion of integral membrane proteins into the membrane. The chain is Putative membrane protein insertion efficiency factor from Yersinia pestis bv. Antiqua (strain Antiqua).